The chain runs to 152 residues: MDEQEIQRLVEEVSLQYFGMPFLHKAMFNRRLRTTGGRYLLNTHNIELNYRYYEMYGKEELVGIVKHELCHYHLHITGRGYKHRDKDFRELLKAVDAPRFCKRMVNAEKEKRVYVYECMECLLQYVRRRQINTKRYVCGKCKGKLNLIKKTS.

In terms of domain architecture, SprT-like spans 7–148; sequence QRLVEEVSLQ…GKCKGKLNLI (142 aa). A Zn(2+)-binding site is contributed by His-67. Residue Glu-68 is part of the active site. His-71 is a binding site for Zn(2+).

Belongs to the SprT family. It depends on Zn(2+) as a cofactor.

Its subcellular location is the cytoplasm. This Bacillus cereus (strain 03BB102) protein is Protein SprT-like.